The chain runs to 469 residues: Light-independent protochlorophyllide reductase subunit N (469 aa).

Residues Cys-24, Cys-49, and Cys-109 each coordinate [4Fe-4S] cluster.

The protein belongs to the BchN/ChlN family. Protochlorophyllide reductase is composed of three subunits; ChlL, ChlN and ChlB. Forms a heterotetramer of two ChlB and two ChlN subunits. Requires [4Fe-4S] cluster as cofactor.

It carries out the reaction chlorophyllide a + oxidized 2[4Fe-4S]-[ferredoxin] + 2 ADP + 2 phosphate = protochlorophyllide a + reduced 2[4Fe-4S]-[ferredoxin] + 2 ATP + 2 H2O. The protein operates within porphyrin-containing compound metabolism; chlorophyll biosynthesis (light-independent). Functionally, component of the dark-operative protochlorophyllide reductase (DPOR) that uses Mg-ATP and reduced ferredoxin to reduce ring D of protochlorophyllide (Pchlide) to form chlorophyllide a (Chlide). This reaction is light-independent. The NB-protein (ChlN-ChlB) is the catalytic component of the complex. This chain is Light-independent protochlorophyllide reductase subunit N, found in Synechocystis sp. (strain ATCC 27184 / PCC 6803 / Kazusa).